A 708-amino-acid chain; its full sequence is Caprin-1 (708 aa).

2 stretches are compositionally biased toward low complexity: residues 1–15 (MPSA…SKSS) and 22–37 (GSSG…APAS). The interval 1-48 (MPSATSHSGSGSKSSGPPPPSGSSGNEAGAGAAAPASQHPMTGTGAVQ) is disordered. At Pro-2 the chain carries N-acetylproline. The residue at position 10 (Ser-10) is a Phosphoserine. The stretch at 58–92 (VIDKKLRNLEKKKGKLDDYQERMNKGERLNQDQLD) forms a coiled coil. At Ser-113 the chain carries Phosphoserine. A coiled-coil region spans residues 123–151 (KTIKKTARREQLMREEAEQKRLKTVLELQ). Residue Arg-163 is modified to Omega-N-methylarginine. A disordered region spans residues 258–287 (EEAASAPTVEDQAAEAEPEPVEEYTEQNEV). Positions 269–287 (QAAEAEPEPVEEYTEQNEV) are enriched in acidic residues. Phosphoserine is present on residues Ser-333 and Ser-341. Residues 358–379 (QDLMAQMQGPYNFIQDSMLDFE) are G3BP1-binding. The span at 415–452 (LAQPNQVSVQPEATQVPLVSSTSEGYTASQPLYQPSHA) shows a compositional bias: polar residues. 4 disordered regions span residues 415–459 (LAQP…RPQK), 473–497 (TDQT…GTSK), 521–559 (NAPV…QTEL), and 571–708 (YHGS…QQVN). 2 stretches are compositionally biased toward low complexity: residues 475–489 (QTTA…SQPQ) and 535–559 (QQNQ…QTEL). Polar residues predominate over residues 572-603 (HGSQDQPHQVTGNHQQPPQQNTGFPRSNQPYY). Tyr-623 bears the Phosphotyrosine mark. Omega-N-methylarginine is present on residues Arg-624 and Arg-631. Tyr-634 and Tyr-637 each carry phosphotyrosine. Residue Arg-638 is modified to Omega-N-methylarginine. Positions 640-656 (SFSTNTPNSGYTQSQFS) are enriched in polar residues. O-linked (GlcNAc) serine glycans are attached at residues Ser-642 and Ser-648. Phosphotyrosine occurs at positions 650, 661, 664, and 669. 2 stretches are compositionally biased toward low complexity: residues 675–685 (RGSGQSGPRGA) and 696–708 (NRGM…QQVN). Arg-697 carries the post-translational modification Asymmetric dimethylarginine; alternate. Arg-697 carries the omega-N-methylarginine; alternate modification.

This sequence belongs to the caprin family. As to quaternary structure, may form homomultimers. Interacts with G3BP1; interaction is direct and promotes stress granule formation. Interacts with G3BP2; interaction is direct and promotes stress granule formation. Interacts with PQBP1. Interacts with DDX3X. Interacts (when phosphorylated by EPHA4) with FMR1; interaction with FMR1 promotes formation of a membraneless compartment. Tyrosine phosphorylation by EPHA4 promotes interaction with FMR1 and liquid-liquid phase separation (LLPS) for the formation of a membraneless compartment that concentrates mRNAs with associated regulatory factors. Post-translationally, O-glycosylated (O-GlcNAcylated), in a cell cycle-dependent manner. O-glycosylation by OGT inhibit ability to undergo liquid-liquid phase separation (LLPS).

The protein localises to the cytoplasm. The protein resides in the cytoplasmic ribonucleoprotein granule. It localises to the cytosol. It is found in the cell projection. Its subcellular location is the dendrite. The protein localises to the lamellipodium. Ability to mediate liquid-liquid phase separation is regulated by ATP: moderate concentrations of ATP enhance phase separation, whereas high concentrations of ATP lead to inhibition of phase separation. Its function is as follows. mRNA-binding protein that acts as a regulator of mRNAs transport, translation and/or stability, and which is involved in neurogenesis, synaptic plasticity in neurons and cell proliferation and migration in multiple cell types. Plays an essential role in cytoplasmic stress granule formation. Acts as an mRNA regulator by mediating formation of some phase-separated membraneless compartment: undergoes liquid-liquid phase separation upon binding to target mRNAs, leading to assemble mRNAs into cytoplasmic ribonucleoprotein granules that concentrate mRNAs with associated regulatory factors. Undergoes liquid-liquid phase separation following phosphorylation and interaction with FMR1, promoting formation of cytoplasmic ribonucleoprotein granules that concentrate mRNAs with factors that inhibit translation and mediate deadenylation of target mRNAs. In these cytoplasmic ribonucleoprotein granules, CAPRIN1 mediates recruitment of CNOT7 deadenylase, leading to mRNA deadenylation and degradation. Binds directly and selectively to MYC and CCND2 mRNAs. In neuronal cells, directly binds to several mRNAs associated with RNA granules, including BDNF, CAMK2A, CREB1, MAP2, NTRK2 mRNAs, as well as to GRIN1 and KPNB1 mRNAs, but not to rRNAs. The polypeptide is Caprin-1 (CAPRIN1) (Bos taurus (Bovine)).